Here is a 194-residue protein sequence, read N- to C-terminus: Putative manganese efflux pump MntP (194 aa).

A run of 6 helical transmembrane segments spans residues 3-23, 37-57, 69-89, 110-132, 147-167, and 172-192; these read PFSIVLIGFAMSTDAFAAAIG, LRAGLIFGCIEAITPVIGWVL, DHWIAFVLLGALGTHMMIAGL, LGLATTGFATSIDAMAVGVSLAF, CTFSMVTAGVMLGRALGNLIG, and ILGGLILVIVGSVILYEHLGA.

It belongs to the MntP (TC 9.B.29) family.

It localises to the cell inner membrane. Functionally, probably functions as a manganese efflux pump. The chain is Putative manganese efflux pump MntP from Xanthomonas oryzae pv. oryzae (strain MAFF 311018).